The following is a 363-amino-acid chain: Fructose-bisphosphate aldolase 2 (363 aa).

Residue Ser-61 coordinates D-glyceraldehyde 3-phosphate. Residue Asp-109 is the Proton donor of the active site. His-110, Asp-144, Glu-174, and His-226 together coordinate Zn(2+). Gly-227 lines the dihydroxyacetone phosphate pocket. His-264 is a Zn(2+) binding site. A dihydroxyacetone phosphate-binding site is contributed by 265–267 (GGS).

This sequence belongs to the class II fructose-bisphosphate aldolase family. Homodimer. The cofactor is Zn(2+).

It carries out the reaction beta-D-fructose 1,6-bisphosphate = D-glyceraldehyde 3-phosphate + dihydroxyacetone phosphate. It functions in the pathway carbohydrate degradation; glycolysis; D-glyceraldehyde 3-phosphate and glycerone phosphate from D-glucose: step 4/4. Its function is as follows. Catalyzes the aldol condensation of dihydroxyacetone phosphate (DHAP or glycerone-phosphate) with glyceraldehyde 3-phosphate (G3P) to form fructose 1,6-bisphosphate (FBP) in gluconeogenesis and the reverse reaction in glycolysis. The polypeptide is Fructose-bisphosphate aldolase 2 (FBA2) (Paracoccidioides lutzii (strain ATCC MYA-826 / Pb01) (Paracoccidioides brasiliensis)).